We begin with the raw amino-acid sequence, 135 residues long: Large ribosomal subunit protein eL27 (135 aa).

It belongs to the eukaryotic ribosomal protein eL27 family.

This is Large ribosomal subunit protein eL27 (RPL27) from Pisum sativum (Garden pea).